Consider the following 871-residue polypeptide: Scavenger receptor class F member 2 (871 aa).

A disordered region spans residues 1 to 20; it reads MEGAGPRGAGPARRRGAGGP. An N-terminal signal peptide occupies residues 1–43; the sequence is MEGAGPRGAGPARRRGAGGPPSPLLPSLLLLLLLWMLPDTVAP. The Extracellular portion of the chain corresponds to 44-441; sequence QELNPRGRNV…ACHLETNQRK (398 aa). 6 consecutive EGF-like domains span residues 71–110, 122–153, 148–182, 183–212, 213–241, and 236–270; these read QGDE…ANCD, CKEL…ARCE, WGAR…AQCA, SACY…RSCN, NQCA…ARCD, and FGAR…KYCR. Intrachain disulfides connect Cys75-Cys86, Cys80-Cys98, Cys100-Cys109, Cys126-Cys134, Cys128-Cys141, Cys143-Cys152, Cys156-Cys163, Cys158-Cys170, Cys172-Cys181, Cys185-Cys193, Cys187-Cys200, Cys202-Cys211, Cys215-Cys222, Cys217-Cys229, Cys231-Cys240, Cys244-Cys251, Cys246-Cys258, and Cys260-Cys269. N-linked (GlcNAc...) asparagine glycosylation occurs at Asn83. 2 N-linked (GlcNAc...) asparagine glycosylation sites follow: Asn310 and Asn365. The EGF-like 7 domain maps to 372-403; that stretch reads CAFVCADCGSGHCDFQSGRCLCSPGVHGPHCN. Cystine bridges form between Cys376–Cys384, Cys379–Cys391, and Cys393–Cys402. N-linked (GlcNAc...) asparagine glycosylation occurs at Asn403. A helical transmembrane segment spans residues 442-462; it reads GVMGAGALLVLLVCLLLSLLG. The Cytoplasmic portion of the chain corresponds to 463–871; sequence CCCACRGKDP…ELGRAGAPTL (409 aa). Ser551 carries the phosphoserine modification. Residues 570–579 are compositionally biased toward basic and acidic residues; that stretch reads EAPAESRDPE. The tract at residues 570 to 871 is disordered; the sequence is EAPAESRDPE…ELGRAGAPTL (302 aa). Ser613 is subject to Phosphoserine. Tyr628 bears the Phosphotyrosine mark. A compositionally biased stretch (basic and acidic residues) spans 632-643; the sequence is ARREARPARARG. Residues Ser651, Ser653, Ser710, Ser718, and Ser742 each carry the phosphoserine modification. Positions 705–725 are enriched in basic and acidic residues; it reads TPSDKSAHTVEHGSPRTRDPT. Over residues 821–831 the composition is skewed to low complexity; sequence PPATETPGPEK. The span at 844–856 shows a compositional bias: basic residues; that stretch reads KKTPIQKPPRKKS. Low complexity predominate over residues 861 to 871; it reads GELGRAGAPTL.

Homophilic and heterophilic interaction via its extracellular domain. Interacts with SCARF1. The heterophilic interaction with SCARF1, which is stronger than the homophilic interaction with itself, is suppressed by the presence of SCARF1 ligand such as Ac-LDL. As to expression, predominantly expressed in endothelial cells. Expressed in heart, placenta, lung, kidney, spleen, small intestine and ovary.

The protein resides in the membrane. Probable adhesion protein, which mediates homophilic and heterophilic interactions. In contrast to SCARF1, it poorly mediates the binding and degradation of acetylated low density lipoprotein (Ac-LDL). In Homo sapiens (Human), this protein is Scavenger receptor class F member 2 (SCARF2).